The sequence spans 259 residues: tRNA (guanine-N(7)-)-methyltransferase (259 aa).

S-adenosyl-L-methionine is bound by residues glycine 80, 103 to 104 (EL), 136 to 137 (NS), and leucine 156. Residue aspartate 159 is part of the active site. 234–236 (TEE) is a binding site for S-adenosyl-L-methionine.

Belongs to the class I-like SAM-binding methyltransferase superfamily. TrmB family.

It is found in the nucleus. The catalysed reaction is guanosine(46) in tRNA + S-adenosyl-L-methionine = N(7)-methylguanosine(46) in tRNA + S-adenosyl-L-homocysteine. Its pathway is tRNA modification; N(7)-methylguanine-tRNA biosynthesis. In terms of biological role, catalyzes the formation of N(7)-methylguanine at position 46 (m7G46) in tRNA. The protein is tRNA (guanine-N(7)-)-methyltransferase of Oryza sativa subsp. indica (Rice).